The following is a 70-amino-acid chain: Conotoxin Lt11.6 (70 aa).

Residues 1 to 26 form the signal peptide; sequence MMFRLTSVGSFLLVIVFLNLVVLTNA. 4 disulfides stabilise this stretch: cysteine 27-cysteine 41, cysteine 34-cysteine 46, cysteine 40-cysteine 50, and cysteine 45-cysteine 54. Positions 58–70 are excised as a propeptide; sequence AQRQKLLRSFGQR.

Belongs to the conotoxin I2 superfamily. Expressed by the venom duct.

It is found in the secreted. The sequence is that of Conotoxin Lt11.6 from Conus litteratus (Lettered cone).